The primary structure comprises 348 residues: Histidinol-phosphate aminotransferase (348 aa).

Position 211 is an N6-(pyridoxal phosphate)lysine (K211).

The protein belongs to the class-II pyridoxal-phosphate-dependent aminotransferase family. Histidinol-phosphate aminotransferase subfamily. Homodimer. The cofactor is pyridoxal 5'-phosphate.

The enzyme catalyses L-histidinol phosphate + 2-oxoglutarate = 3-(imidazol-4-yl)-2-oxopropyl phosphate + L-glutamate. Its pathway is amino-acid biosynthesis; L-histidine biosynthesis; L-histidine from 5-phospho-alpha-D-ribose 1-diphosphate: step 7/9. This Pseudomonas entomophila (strain L48) protein is Histidinol-phosphate aminotransferase.